The sequence spans 187 residues: Elongation factor P (187 aa).

It belongs to the elongation factor P family.

It is found in the cytoplasm. It functions in the pathway protein biosynthesis; polypeptide chain elongation. Functionally, involved in peptide bond synthesis. Stimulates efficient translation and peptide-bond synthesis on native or reconstituted 70S ribosomes in vitro. Probably functions indirectly by altering the affinity of the ribosome for aminoacyl-tRNA, thus increasing their reactivity as acceptors for peptidyl transferase. The chain is Elongation factor P from Granulibacter bethesdensis (strain ATCC BAA-1260 / CGDNIH1).